Here is a 65-residue protein sequence, read N- to C-terminus: Large ribosomal subunit protein eL24 (65 aa).

Zn(2+) is bound by residues C6, C9, C32, and C36. A C4-type zinc finger spans residues 6–36 (CAFCGADIPPGYGIMYVKSDGTVLRYCSRKC).

This sequence belongs to the eukaryotic ribosomal protein eL24 family. As to quaternary structure, part of the 50S ribosomal subunit. Forms a cluster with proteins L3 and L14. The cofactor is Zn(2+).

Functionally, binds to the 23S rRNA. The chain is Large ribosomal subunit protein eL24 from Pyrobaculum arsenaticum (strain DSM 13514 / JCM 11321 / PZ6).